A 238-amino-acid chain; its full sequence is Orotate phosphoribosyltransferase (238 aa).

Residue lysine 29 coordinates 5-phospho-alpha-D-ribose 1-diphosphate. Phenylalanine 37–phenylalanine 38 is an orotate binding site. Residues tyrosine 87 to lysine 88, arginine 118, lysine 119, lysine 122, histidine 124, and aspartate 144 to alanine 152 each bind 5-phospho-alpha-D-ribose 1-diphosphate. Threonine 148 and arginine 176 together coordinate orotate.

The protein belongs to the purine/pyrimidine phosphoribosyltransferase family. PyrE subfamily. Homodimer.

It carries out the reaction orotidine 5'-phosphate + diphosphate = orotate + 5-phospho-alpha-D-ribose 1-diphosphate. The protein operates within pyrimidine metabolism; UMP biosynthesis via de novo pathway; UMP from orotate: step 1/2. Its function is as follows. Catalyzes the transfer of a ribosyl phosphate group from 5-phosphoribose 1-diphosphate to orotate, leading to the formation of orotidine monophosphate (OMP). This chain is Orotate phosphoribosyltransferase (URA5), found in Coccidioides immitis (strain RS) (Valley fever fungus).